Consider the following 105-residue polypeptide: Large ribosomal subunit protein eL42 (105 aa).

Residues 23-61 (KVTQYKKGKESKFAQGRRRYDRKQSGFGGQTKPIFRKKA) are disordered.

Belongs to the eukaryotic ribosomal protein eL42 family.

The sequence is that of Large ribosomal subunit protein eL42 from Caenorhabditis elegans.